A 499-amino-acid chain; its full sequence is Protein flp (499 aa).

Transmembrane regions (helical) follow at residues 6 to 26 (LYFL…IYIT), 389 to 409 (FNIV…FSAY), 433 to 453 (LTLC…YLIL), and 471 to 491 (LTLT…LLIL).

The protein localises to the cell membrane. Its precise function is unknown. Has no penicillin-binding activity and is not involved in methicillin resistance. The protein is Protein flp (flp) of Staphylococcus aureus (strain MRSA252).